Consider the following 322-residue polypeptide: Olfactory receptor 1J1 (322 aa).

The Extracellular segment spans residues 1 to 25 (MSPENQSSVSEFLLLGLPIRPEQQA). N-linked (GlcNAc...) asparagine glycosylation occurs at N5. The helical transmembrane segment at 26 to 49 (VFFALFLGMYLTTVLGNLLIMLLI) threads the bilayer. Residues 50–57 (QLDSHLHT) lie on the Cytoplasmic side of the membrane. The helical transmembrane segment at 58–79 (PMYFFLSHLALTDISFSSVTVP) threads the bilayer. Topologically, residues 80–100 (KMLMNMQTQHLAVFYKGCISQ) are extracellular. C97 and C189 are oxidised to a cystine. A helical transmembrane segment spans residues 101 to 120 (TYFFIFFADLDSFLITSMAY). Residues 121-139 (DRYVAICHPLHYATIMTQS) are Cytoplasmic-facing. The chain crosses the membrane as a helical span at residues 140-158 (QCVMLVAGSWVIACACALL). At 159–196 (HTLLLAQLSFCADHIIPHYFCDLGALLKLSCSDTSLNQ) the chain is on the extracellular side. A helical membrane pass occupies residues 197–219 (LAIFTAALTAIMLPFLCILVSYG). Residues 220-236 (HIGVTILQIPSTKGICK) lie on the Cytoplasmic side of the membrane. A helical membrane pass occupies residues 237-259 (ALSTCGSHLSVVTIYYRTIIGLY). The Extracellular segment spans residues 260–272 (FLPPSSNTNDKNI). The helical transmembrane segment at 273-292 (IASVIYTAVTPMLNPFIYSL) threads the bilayer. At 293–322 (RNKDIKGALRKLLSRSGAVAHACNLNTLGG) the chain is on the cytoplasmic side.

The protein belongs to the G-protein coupled receptor 1 family.

It is found in the cell membrane. Odorant receptor. This chain is Olfactory receptor 1J1, found in Homo sapiens (Human).